Here is a 128-residue protein sequence, read N- to C-terminus: Large ribosomal subunit protein bL12 (128 aa).

It belongs to the bacterial ribosomal protein bL12 family. Homodimer. Part of the ribosomal stalk of the 50S ribosomal subunit. Forms a multimeric L10(L12)X complex, where L10 forms an elongated spine to which 2 to 4 L12 dimers bind in a sequential fashion. Binds GTP-bound translation factors.

Functionally, forms part of the ribosomal stalk which helps the ribosome interact with GTP-bound translation factors. Is thus essential for accurate translation. The chain is Large ribosomal subunit protein bL12 from Trichormus variabilis (strain ATCC 29413 / PCC 7937) (Anabaena variabilis).